The primary structure comprises 369 residues: Delta(6)-protoilludene synthase STEHIDRAFT_73029 (369 aa).

Mg(2+) is bound by residues Asp107, Asn243, Ser247, and Glu251. The D(D/E)XX(D/E) motif signature appears at 107 to 111 (DEYSD). The NSE motif signature appears at 243-251 (NDIVSYNLE). Residues Arg333 and Tyr334 each coordinate (2E,6E)-farnesyl diphosphate.

It belongs to the terpene synthase family. Mg(2+) serves as cofactor. Requires Mn(2+) as cofactor. The cofactor is Ca(2+). It depends on Ni(2+) as a cofactor. Co(2+) is required as a cofactor.

It carries out the reaction (2E,6E)-farnesyl diphosphate = Delta(6)-protoilludene + diphosphate. It catalyses the reaction (2E,6E)-farnesyl diphosphate = alpha-selinene + diphosphate. Ca(2+) switches the cyclization mechanism of delta(6)-protoilludene synthase from 1,11 to 1,10 cyclization which leads to the production of beta-elemene. Its function is as follows. Terpene cyclase that catalyzes the cyclization of farnesyl diphosphate (FPP) to delta(6)-protoilludene. In presence of Ca(2+), a significant switch from 1,11 to a dual 1,11/1,10 cyclization occurs, producing beta-elemene as the major product, with lower levels of delta(6)-protoilludene and (E)-beta-caryophyllene, and traces of beta-selinene and alpha-selinene. The protein is Delta(6)-protoilludene synthase STEHIDRAFT_73029 of Stereum hirsutum (strain FP-91666) (White-rot fungus).